Reading from the N-terminus, the 88-residue chain is U-scoloptoxin(12)-Sa1a (88 aa).

A signal peptide spans 1 to 20; it reads MKYMIITVVILFTCALKMFC.

This sequence belongs to the scoloptoxin-12 family. Contains 3 disulfide bonds. Expressed by the venom gland.

It is found in the secreted. In Scolopendra alternans (Florida Keys giant centipede), this protein is U-scoloptoxin(12)-Sa1a.